Here is a 168-residue protein sequence, read N- to C-terminus: Transcription antitermination protein NusB (168 aa).

The protein belongs to the NusB family.

In terms of biological role, involved in transcription antitermination. Required for transcription of ribosomal RNA (rRNA) genes. Binds specifically to the boxA antiterminator sequence of the ribosomal RNA (rrn) operons. This is Transcription antitermination protein NusB from Bradyrhizobium sp. (strain ORS 278).